A 505-amino-acid chain; its full sequence is Glucan endo-1,3-beta-glucosidase 4 (505 aa).

Residues 1-23 (MLLPRWFAEALLLLLSILACSNA) form the signal peptide. N-linked (GlcNAc...) asparagine glycosylation is found at asparagine 70 and asparagine 110. Residue glutamate 119 is the Proton donor of the active site. N-linked (GlcNAc...) asparagine glycosylation is found at asparagine 178 and asparagine 256. Glutamate 266 serves as the catalytic Nucleophile. N-linked (GlcNAc...) asparagine glycans are attached at residues asparagine 298, asparagine 338, and asparagine 357. Cysteine 363 and cysteine 426 are joined by a disulfide. An N-linked (GlcNAc...) asparagine glycan is attached at asparagine 453. A lipid anchor (GPI-anchor amidated alanine) is attached at alanine 474. A propeptide spans 475–505 (NARIIFSYHLPILAPLALTLLQLLLQHDRLL) (removed in mature form).

This sequence belongs to the glycosyl hydrolase 17 family. Contains two additional disulfide bonds.

It localises to the cell membrane. It carries out the reaction Hydrolysis of (1-&gt;3)-beta-D-glucosidic linkages in (1-&gt;3)-beta-D-glucans.. In Arabidopsis thaliana (Mouse-ear cress), this protein is Glucan endo-1,3-beta-glucosidase 4.